The primary structure comprises 591 residues: Aspartate--tRNA(Asp/Asn) ligase (591 aa).

L-aspartate is bound at residue glutamate 174. An aspartate region spans residues 198-201; that stretch reads QLFK. L-aspartate is bound at residue arginine 220. Residues 220-222 and glutamine 229 each bind ATP; that span reads RDE. Histidine 450 provides a ligand contact to L-aspartate. An ATP-binding site is contributed by glutamate 483. Arginine 490 is an L-aspartate binding site. Residue 535–538 participates in ATP binding; the sequence is GLDR.

The protein belongs to the class-II aminoacyl-tRNA synthetase family. Type 1 subfamily. As to quaternary structure, homodimer.

It is found in the cytoplasm. It carries out the reaction tRNA(Asx) + L-aspartate + ATP = L-aspartyl-tRNA(Asx) + AMP + diphosphate. Aspartyl-tRNA synthetase with relaxed tRNA specificity since it is able to aspartylate not only its cognate tRNA(Asp) but also tRNA(Asn). Reaction proceeds in two steps: L-aspartate is first activated by ATP to form Asp-AMP and then transferred to the acceptor end of tRNA(Asp/Asn). This is Aspartate--tRNA(Asp/Asn) ligase from Pseudomonas savastanoi pv. phaseolicola (strain 1448A / Race 6) (Pseudomonas syringae pv. phaseolicola (strain 1448A / Race 6)).